Reading from the N-terminus, the 146-residue chain is Large ribosomal subunit protein uL15 (146 aa).

Residues M1–E51 form a disordered region. Composition is skewed to gly residues over residues R21–S31 and S42–E51.

The protein belongs to the universal ribosomal protein uL15 family. In terms of assembly, part of the 50S ribosomal subunit.

Binds to the 23S rRNA. The polypeptide is Large ribosomal subunit protein uL15 (Anoxybacillus flavithermus (strain DSM 21510 / WK1)).